We begin with the raw amino-acid sequence, 418 residues long: F-box protein At5g03970 (418 aa).

An F-box domain is found at serine 18–alanine 66.

In Arabidopsis thaliana (Mouse-ear cress), this protein is F-box protein At5g03970.